Consider the following 280-residue polypeptide: Lacto-N-neotetraose biosynthesis glycosyltransferase LgtE (280 aa).

This sequence belongs to the glycosyltransferase 25 family.

The protein operates within glycan metabolism; lacto-N-neotetraose biosynthesis. It functions in the pathway bacterial outer membrane biogenesis; lipooligosaccharide biosynthesis. Adds the first galactose to the lacto-N-tetraose chain in lipooligosaccharide (LOS). The polypeptide is Lacto-N-neotetraose biosynthesis glycosyltransferase LgtE (lgtE) (Neisseria gonorrhoeae).